Here is a 143-residue protein sequence, read N- to C-terminus: Large ribosomal subunit protein uL11 (143 aa).

The protein belongs to the universal ribosomal protein uL11 family. In terms of assembly, part of the ribosomal stalk of the 50S ribosomal subunit. Interacts with L10 and the large rRNA to form the base of the stalk. L10 forms an elongated spine to which L12 dimers bind in a sequential fashion forming a multimeric L10(L12)X complex. One or more lysine residues are methylated.

Functionally, forms part of the ribosomal stalk which helps the ribosome interact with GTP-bound translation factors. This Cupriavidus pinatubonensis (strain JMP 134 / LMG 1197) (Cupriavidus necator (strain JMP 134)) protein is Large ribosomal subunit protein uL11.